The following is a 91-amino-acid chain: Alpha-latrotoxin associated low molecular weight protein SGV150-311 (91 aa).

Positions M1–C18 are cleaved as a signal peptide.

This sequence belongs to the arthropod CHH/MIH/GIH/VIH hormone family. As to expression, expressed by the venom gland.

It localises to the secreted. In terms of biological role, may increase the toxicity of alpha-latrotoxin and/or other venom components. Is non-toxic to mice and to the cockroach Periplaneta americana. This Steatoda grossa (False black widow) protein is Alpha-latrotoxin associated low molecular weight protein SGV150-311.